The following is a 700-amino-acid chain: DNA ligase (700 aa).

NAD(+) is bound by residues 61 to 65 (DAEYD), 110 to 111 (SL), and E141. The active-site N6-AMP-lysine intermediate is the K143. NAD(+) contacts are provided by R164, E202, K321, and K345. 4 residues coordinate Zn(2+): C439, C442, C457, and C462. Positions 619–700 (AVSNKLAGLQ…EFLRLLEDSK (82 aa)) constitute a BRCT domain.

Belongs to the NAD-dependent DNA ligase family. LigA subfamily. Mg(2+) serves as cofactor. The cofactor is Mn(2+).

It carries out the reaction NAD(+) + (deoxyribonucleotide)n-3'-hydroxyl + 5'-phospho-(deoxyribonucleotide)m = (deoxyribonucleotide)n+m + AMP + beta-nicotinamide D-nucleotide.. In terms of biological role, DNA ligase that catalyzes the formation of phosphodiester linkages between 5'-phosphoryl and 3'-hydroxyl groups in double-stranded DNA using NAD as a coenzyme and as the energy source for the reaction. It is essential for DNA replication and repair of damaged DNA. This Hydrogenobaculum sp. (strain Y04AAS1) protein is DNA ligase.